The sequence spans 390 residues: Phosphoglycerate kinase (390 aa).

Residues 21 to 23, R36, 59 to 62, R113, and R146 contribute to the substrate site; these read DMN and HLGR. Residues K197, E319, and 345–348 each bind ATP; that span reads GGDT.

It belongs to the phosphoglycerate kinase family. As to quaternary structure, monomer.

The protein localises to the cytoplasm. The catalysed reaction is (2R)-3-phosphoglycerate + ATP = (2R)-3-phospho-glyceroyl phosphate + ADP. Its pathway is carbohydrate degradation; glycolysis; pyruvate from D-glyceraldehyde 3-phosphate: step 2/5. The sequence is that of Phosphoglycerate kinase from Laribacter hongkongensis (strain HLHK9).